Reading from the N-terminus, the 281-residue chain is Leukocyte antigen CD37 (281 aa).

At 1–17 (MSAQESCLSLIKYFLFV) the chain is on the cytoplasmic side. Residues 18 to 38 (FNLFFFVLGSLIFCFGIWILI) traverse the membrane as a helical segment. The Extracellular segment spans residues 39-59 (DKTSFVSFVGLAFVPLQIWSK). Residues 60–74 (VLAISGIFTMGIALL) traverse the membrane as a helical segment. At 75–85 (GCVGALKELRC) the chain is on the cytoplasmic side. The chain crosses the membrane as a helical span at residues 86-111 (LLGLYFGMLLLLFATQITLGILISTQ). At 112-241 (RAQLERSLRD…QGLQKWLHNN (130 aa)) the chain is on the extracellular side. N-linked (GlcNAc...) asparagine glycans are attached at residues Asn170, Asn183, and Asn188. A helical transmembrane segment spans residues 242–266 (LISIVGICLGVGLLELGFMTLSIFL). At 267–281 (CRNLDHVYNRLARYR) the chain is on the cytoplasmic side.

The protein belongs to the tetraspanin (TM4SF) family. In terms of assembly, interacts with SCIMP. Interacts with SOCS3. Interacts with DECTIN1/CLEC7A. Post-translationally, tyrosine phosphorylated; leading to activation of downstream signaling pathways. B-lymphocytes. Antigen presenting cells.

The protein localises to the cell membrane. Functionally, structural component of specialized membrane microdomains known as tetraspanin-enriched microdomains (TERMs), which act as platforms for receptor clustering and signaling. Participates thereby in diverse biological functions such as cell signal transduction, adhesion, migration and protein trafficking. Upon ligand binding, two signaling pathways are activated, one acting through phosphorylation by LYN leading to cell death or a survival pathway with activation of GSK3B. Plays an essential role essential for clustering of integrin ITGA4/ITGB1 and promotes its mobility in the plasma membrane of B-cells. In turn, participates in ITGA4/ITGB1 integrin-mediated antiapoptotic signaling through AKT. Also plays a role in the migration of dendritic cells and neutrophils to draining lymph nodes, as well as in their integrin-mediated adhesion. Negatively regulates IL-6 responses through direct interaction with SOCS3 thereby preventing constitutive IL-6 signaling. Alternatively, inhibition of IL-6 signaling can also occur via interaction and stabilization of DECTIN1/CLEC7A at the cell membrane to inhibit its ability to promote the production of IL-6. This Homo sapiens (Human) protein is Leukocyte antigen CD37 (CD37).